The chain runs to 158 residues: NAD(P)H-quinone oxidoreductase subunit J, chloroplastic (158 aa).

This sequence belongs to the complex I 30 kDa subunit family. In terms of assembly, NDH is composed of at least 16 different subunits, 5 of which are encoded in the nucleus.

The protein resides in the plastid. Its subcellular location is the chloroplast thylakoid membrane. It carries out the reaction a plastoquinone + NADH + (n+1) H(+)(in) = a plastoquinol + NAD(+) + n H(+)(out). The catalysed reaction is a plastoquinone + NADPH + (n+1) H(+)(in) = a plastoquinol + NADP(+) + n H(+)(out). NDH shuttles electrons from NAD(P)H:plastoquinone, via FMN and iron-sulfur (Fe-S) centers, to quinones in the photosynthetic chain and possibly in a chloroplast respiratory chain. The immediate electron acceptor for the enzyme in this species is believed to be plastoquinone. Couples the redox reaction to proton translocation, and thus conserves the redox energy in a proton gradient. This is NAD(P)H-quinone oxidoreductase subunit J, chloroplastic from Oenothera argillicola (Appalachian evening primrose).